Reading from the N-terminus, the 248-residue chain is 5'-nucleotidase SurE (248 aa).

Positions 8, 9, 39, and 91 each coordinate a divalent metal cation.

It belongs to the SurE nucleotidase family. A divalent metal cation is required as a cofactor.

It is found in the cytoplasm. It carries out the reaction a ribonucleoside 5'-phosphate + H2O = a ribonucleoside + phosphate. Its function is as follows. Nucleotidase that shows phosphatase activity on nucleoside 5'-monophosphates. The protein is 5'-nucleotidase SurE of Pseudoalteromonas atlantica (strain T6c / ATCC BAA-1087).